A 555-amino-acid polypeptide reads, in one-letter code: Membrane protein insertase YidC (555 aa).

Residues 7–24 form a helical membrane-spanning segment; it reads ILWVIFSMSLVLLYDNWQ. A disordered region spans residues 62–81; it reads APGAAGTAAPAAPQAAAQPT. 5 helical membrane-spanning segments follow: residues 334-354, 360-380, 430-450, 468-488, and 503-523; these read LELV…FWLL, FLGN…LVFF, LGGC…YWVL, LSVP…MFVQ, and VMMI…AGLV.

This sequence belongs to the OXA1/ALB3/YidC family. Type 1 subfamily. As to quaternary structure, interacts with the Sec translocase complex via SecD. Specifically interacts with transmembrane segments of nascent integral membrane proteins during membrane integration.

Its subcellular location is the cell inner membrane. Its function is as follows. Required for the insertion and/or proper folding and/or complex formation of integral membrane proteins into the membrane. Involved in integration of membrane proteins that insert both dependently and independently of the Sec translocase complex, as well as at least some lipoproteins. Aids folding of multispanning membrane proteins. The protein is Membrane protein insertase YidC of Cupriavidus necator (strain ATCC 17699 / DSM 428 / KCTC 22496 / NCIMB 10442 / H16 / Stanier 337) (Ralstonia eutropha).